The following is a 309-amino-acid chain: Methionyl-tRNA formyltransferase (309 aa).

112–115 (SLLP) provides a ligand contact to (6S)-5,6,7,8-tetrahydrofolate.

The protein belongs to the Fmt family.

It carries out the reaction L-methionyl-tRNA(fMet) + (6R)-10-formyltetrahydrofolate = N-formyl-L-methionyl-tRNA(fMet) + (6S)-5,6,7,8-tetrahydrofolate + H(+). Functionally, attaches a formyl group to the free amino group of methionyl-tRNA(fMet). The formyl group appears to play a dual role in the initiator identity of N-formylmethionyl-tRNA by promoting its recognition by IF2 and preventing the misappropriation of this tRNA by the elongation apparatus. This Bartonella bacilliformis (strain ATCC 35685 / KC583 / Herrer 020/F12,63) protein is Methionyl-tRNA formyltransferase.